Here is an 896-residue protein sequence, read N- to C-terminus: Myelin regulatory factor-like protein (896 aa).

The NDT80 DNA-binding region spans 111 to 403 (GLPHRTFHNC…SNPGQFENDI (293 aa)). One can recognise a Peptidase S74 domain in the interval 449–557 (SDSRAKQNVQ…KLTNNLEERI (109 aa)). Residues 541–573 (GAVKQLCKLTNNLEERIEELEIWNRKLARLKRL) adopt a coiled-coil conformation. A helical transmembrane segment spans residues 622-638 (VFQSLVITLIAVMAFCL). The span at 648–658 (APSSNLTSSQE) shows a compositional bias: polar residues. Residues 648–672 (APSSNLTSSQEPALPSTASPSAPNT) form a disordered region. Positions 659-672 (PALPSTASPSAPNT) are enriched in low complexity.

It belongs to the MRF family.

The protein localises to the membrane. This Bos taurus (Bovine) protein is Myelin regulatory factor-like protein (MYRFL).